Reading from the N-terminus, the 286-residue chain is Fructose-bisphosphate aldolase (286 aa).

Residue Ser50 coordinates D-glyceraldehyde 3-phosphate. Asp85 functions as the Proton donor in the catalytic mechanism. Positions 86, 107, 137, and 181 each coordinate Zn(2+). Gly182 provides a ligand contact to dihydroxyacetone phosphate. Zn(2+) is bound at residue His209. Dihydroxyacetone phosphate is bound by residues 210–212 and 231–234; these read GGT and NVNT.

The protein belongs to the class II fructose-bisphosphate aldolase family. It depends on Zn(2+) as a cofactor.

It catalyses the reaction beta-D-fructose 1,6-bisphosphate = D-glyceraldehyde 3-phosphate + dihydroxyacetone phosphate. It participates in carbohydrate degradation; glycolysis; D-glyceraldehyde 3-phosphate and glycerone phosphate from D-glucose: step 4/4. In terms of biological role, catalyzes the aldol condensation of dihydroxyacetone phosphate (DHAP or glycerone-phosphate) with glyceraldehyde 3-phosphate (G3P) to form fructose 1,6-bisphosphate (FBP) in gluconeogenesis and the reverse reaction in glycolysis. The sequence is that of Fructose-bisphosphate aldolase (fba) from Staphylococcus aureus (strain MSSA476).